We begin with the raw amino-acid sequence, 380 residues long: Septin homolog spn4 (380 aa).

Positions 25–298 constitute a Septin-type G domain; it reads NGVAFTLMLC…EQYRQEQMKV (274 aa). Residues 35–42 form a G1 motif region; it reads GESGLGKT. Residues 35-42, Thr70, Gly96, 175-183, Gly231, and Arg247 contribute to the GTP site; these read GESGLGKT and KADMYTRRD. The segment at 93–96 is G3 motif; it reads DTPG. Residues 174 to 177 form a G4 motif region; the sequence is AKAD.

This sequence belongs to the TRAFAC class TrmE-Era-EngA-EngB-Septin-like GTPase superfamily. Septin GTPase family. As to quaternary structure, component of the septin complex composed of two copies of each spn1, spn2, spn3 and spn4.

The protein resides in the cytoplasm. It localises to the cell cortex. In terms of biological role, plays a role in the cell cycle. Involved in a late stage of septum formation leading to the separation of the daughter cells. This Schizosaccharomyces pombe (strain 972 / ATCC 24843) (Fission yeast) protein is Septin homolog spn4 (spn4).